The chain runs to 662 residues: Glutathione hydrolase 7 (662 aa).

Residues 1–106 are Cytoplasmic-facing; it reads MAAENEASQE…AAECSCRQDG (106 aa). 4 positions are modified to phosphoserine: Ser17, Ser72, Ser79, and Ser83. The tract at residues 26–90 is disordered; sequence SFPRLPEDEP…DGSPLRETRK (65 aa). A compositionally biased stretch (low complexity) spans 72-83; it reads SSSSEMGSQDGS. The chain crosses the membrane as a helical; Signal-anchor for type II membrane protein span at residues 107-127; it reads LTVIVTACLTFATGVTVALVM. Residues 128 to 662 lie on the Extracellular side of the membrane; it reads QIYFGDPQIF…SPDAAGATIL (535 aa). N-linked (GlcNAc...) asparagine glycans are attached at residues Asn198, Asn267, Asn283, Asn330, Asn353, Asn394, Asn519, Asn523, and Asn586.

Belongs to the gamma-glutamyltransferase family. As to quaternary structure, heterodimer composed of the light and heavy chains. The active site is located in the light chain. In terms of processing, cleaved by autocatalysis into a large and a small subunit and the autocatalytic cleavage is essential to the functional activation of the enzyme.

Its subcellular location is the membrane. The enzyme catalyses an N-terminal (5-L-glutamyl)-[peptide] + an alpha-amino acid = 5-L-glutamyl amino acid + an N-terminal L-alpha-aminoacyl-[peptide]. It carries out the reaction glutathione + H2O = L-cysteinylglycine + L-glutamate. The catalysed reaction is an S-substituted glutathione + H2O = an S-substituted L-cysteinylglycine + L-glutamate. The protein operates within sulfur metabolism; glutathione metabolism. Its function is as follows. Hydrolyzes and transfers gamma-glutamyl moieties from glutathione and other gamma-glutamyl compounds to acceptors. The sequence is that of Glutathione hydrolase 7 from Mus musculus (Mouse).